A 92-amino-acid polypeptide reads, in one-letter code: Small ribosomal subunit protein uS19 (92 aa).

Belongs to the universal ribosomal protein uS19 family.

Protein S19 forms a complex with S13 that binds strongly to the 16S ribosomal RNA. The sequence is that of Small ribosomal subunit protein uS19 from Borrelia duttonii (strain Ly).